Here is a 191-residue protein sequence, read N- to C-terminus: Probable nicotinate-nucleotide adenylyltransferase (191 aa).

Belongs to the NadD family.

The enzyme catalyses nicotinate beta-D-ribonucleotide + ATP + H(+) = deamido-NAD(+) + diphosphate. The protein operates within cofactor biosynthesis; NAD(+) biosynthesis; deamido-NAD(+) from nicotinate D-ribonucleotide: step 1/1. Catalyzes the reversible adenylation of nicotinate mononucleotide (NaMN) to nicotinic acid adenine dinucleotide (NaAD). In Oceanobacillus iheyensis (strain DSM 14371 / CIP 107618 / JCM 11309 / KCTC 3954 / HTE831), this protein is Probable nicotinate-nucleotide adenylyltransferase.